The sequence spans 232 residues: MNNAINSPVIVALDNMTKNASLALADQLDPALCRLKVGKELYTRCGPEIVKALHQRQFEVFLDLKFHDIPNTTAQAVLAAAELGIWMVNVHASAGLEAMALAKQRLLDSDFDTLLIAVTVLTSMDNEALMQTGITDGLDAQVSRLAQLTKQAGLDGVVCSAQEAKTLKALCGQDFKLITPGIRLLDDNADDQKRICTPKQALNDGSDYLVIGRSITQAADPAAKLQLILQSL.

Substrate-binding positions include Asp-14, Lys-36, 63–72, Thr-122, Arg-183, Gln-192, Gly-212, and Arg-213; that span reads DLKFHDIPNT. Lys-65 serves as the catalytic Proton donor.

It belongs to the OMP decarboxylase family. Type 1 subfamily. Homodimer.

It carries out the reaction orotidine 5'-phosphate + H(+) = UMP + CO2. It participates in pyrimidine metabolism; UMP biosynthesis via de novo pathway; UMP from orotate: step 2/2. Catalyzes the decarboxylation of orotidine 5'-monophosphate (OMP) to uridine 5'-monophosphate (UMP). This is Orotidine 5'-phosphate decarboxylase from Psychrobacter arcticus (strain DSM 17307 / VKM B-2377 / 273-4).